Consider the following 264-residue polypeptide: Thymidylate synthase (264 aa).

Arginine 21 provides a ligand contact to dUMP. (6R)-5,10-methylene-5,6,7,8-tetrahydrofolate is bound at residue histidine 51. 126-127 (RR) lines the dUMP pocket. Cysteine 146 (nucleophile) is an active-site residue. DUMP contacts are provided by residues 166–169 (RSCD), asparagine 177, and 207–209 (HLY). (6R)-5,10-methylene-5,6,7,8-tetrahydrofolate is bound at residue aspartate 169. Alanine 263 is a binding site for (6R)-5,10-methylene-5,6,7,8-tetrahydrofolate.

It belongs to the thymidylate synthase family. Bacterial-type ThyA subfamily. In terms of assembly, homodimer.

It localises to the cytoplasm. It carries out the reaction dUMP + (6R)-5,10-methylene-5,6,7,8-tetrahydrofolate = 7,8-dihydrofolate + dTMP. The protein operates within pyrimidine metabolism; dTTP biosynthesis. Catalyzes the reductive methylation of 2'-deoxyuridine-5'-monophosphate (dUMP) to 2'-deoxythymidine-5'-monophosphate (dTMP) while utilizing 5,10-methylenetetrahydrofolate (mTHF) as the methyl donor and reductant in the reaction, yielding dihydrofolate (DHF) as a by-product. This enzymatic reaction provides an intracellular de novo source of dTMP, an essential precursor for DNA biosynthesis. The chain is Thymidylate synthase from Edwardsiella ictaluri (strain 93-146).